A 400-amino-acid polypeptide reads, in one-letter code: CCA-adding enzyme (400 aa).

2 residues coordinate ATP: glycine 28 and arginine 31. Positions 28 and 31 each coordinate CTP. Aspartate 41 and aspartate 43 together coordinate Mg(2+). ATP contacts are provided by arginine 112, aspartate 155, arginine 158, arginine 161, and arginine 164. Positions 112, 155, 158, 161, and 164 each coordinate CTP.

The protein belongs to the tRNA nucleotidyltransferase/poly(A) polymerase family. Bacterial CCA-adding enzyme type 3 subfamily. As to quaternary structure, homodimer. Mg(2+) is required as a cofactor.

It catalyses the reaction a tRNA precursor + 2 CTP + ATP = a tRNA with a 3' CCA end + 3 diphosphate. The catalysed reaction is a tRNA with a 3' CCA end + 2 CTP + ATP = a tRNA with a 3' CCACCA end + 3 diphosphate. In terms of biological role, catalyzes the addition and repair of the essential 3'-terminal CCA sequence in tRNAs without using a nucleic acid template. Adds these three nucleotides in the order of C, C, and A to the tRNA nucleotide-73, using CTP and ATP as substrates and producing inorganic pyrophosphate. tRNA 3'-terminal CCA addition is required both for tRNA processing and repair. Also involved in tRNA surveillance by mediating tandem CCA addition to generate a CCACCA at the 3' terminus of unstable tRNAs. While stable tRNAs receive only 3'-terminal CCA, unstable tRNAs are marked with CCACCA and rapidly degraded. The chain is CCA-adding enzyme from Staphylococcus aureus (strain bovine RF122 / ET3-1).